The following is a 232-amino-acid chain: MVAKRIQKIREGVDPTKLYALTQAIGMVKERAIAKFDETIEVSMNLGVDPRHADQMVRGVVNLPNGTGRSVRVAVFARGAKADEAKAAGADIVGAEELVEIVQGGKIDFDRCIATPDMMPLVGRLGKVLGPRGMMPNPKVGTVTMDVKGAVEASKGGAVEFRVEKAGIVHAGIGKASFDAKALEENIRAFADAVIKAKPAGAKGNYVKRVAISSTMGPGVKIELASVTAPNA.

This sequence belongs to the universal ribosomal protein uL1 family. Part of the 50S ribosomal subunit.

Binds directly to 23S rRNA. The L1 stalk is quite mobile in the ribosome, and is involved in E site tRNA release. Functionally, protein L1 is also a translational repressor protein, it controls the translation of the L11 operon by binding to its mRNA. This chain is Large ribosomal subunit protein uL1, found in Rhizobium rhizogenes (strain K84 / ATCC BAA-868) (Agrobacterium radiobacter).